The chain runs to 129 residues: Large ribosomal subunit protein uL22 (129 aa).

The protein belongs to the universal ribosomal protein uL22 family. As to quaternary structure, part of the 50S ribosomal subunit.

In terms of biological role, this protein binds specifically to 23S rRNA; its binding is stimulated by other ribosomal proteins, e.g. L4, L17, and L20. It is important during the early stages of 50S assembly. It makes multiple contacts with different domains of the 23S rRNA in the assembled 50S subunit and ribosome. Its function is as follows. The globular domain of the protein is located near the polypeptide exit tunnel on the outside of the subunit, while an extended beta-hairpin is found that lines the wall of the exit tunnel in the center of the 70S ribosome. In Mesorhizobium japonicum (strain LMG 29417 / CECT 9101 / MAFF 303099) (Mesorhizobium loti (strain MAFF 303099)), this protein is Large ribosomal subunit protein uL22.